The primary structure comprises 483 residues: 1-aminocyclopropane-1-carboxylate synthase 2 (483 aa).

Lys-275 carries the N6-(pyridoxal phosphate)lysine modification.

It belongs to the class-I pyridoxal-phosphate-dependent aminotransferase family. The cofactor is pyridoxal 5'-phosphate.

It carries out the reaction S-adenosyl-L-methionine = 1-aminocyclopropane-1-carboxylate + S-methyl-5'-thioadenosine + H(+). It functions in the pathway alkene biosynthesis; ethylene biosynthesis via S-adenosyl-L-methionine; ethylene from S-adenosyl-L-methionine: step 1/2. Catalyzes the formation of 1-aminocyclopropane-1-carboxylate, a direct precursor of ethylene in higher plants. Involved in defense response by producing ethylene after pathogen infection. Involved in several phosphate deficiency-induced adaptive responses, such as lateral root elongation. The chain is 1-aminocyclopropane-1-carboxylate synthase 2 from Oryza sativa subsp. japonica (Rice).